The primary structure comprises 98 residues: Putative protein adenylyltransferase MJ0128 (98 aa).

Residues 31 to 45 carry the GSX(10)DXD motif motif; that stretch reads GSYARNEQTEKSDID. The Mg(2+) site is built by D43, D45, and D75.

The protein belongs to the MntA antitoxin family. As to quaternary structure, probably forms a complex with cognate toxin MJ0127. It depends on Mg(2+) as a cofactor.

It catalyses the reaction L-tyrosyl-[protein] + ATP = O-(5'-adenylyl)-L-tyrosyl-[protein] + diphosphate. The enzyme catalyses O-(5'-adenylyl)-L-tyrosyl-[protein] + ATP = O-[5'-(adenylyl-(5'-&gt;3')-adenylyl)]-L-tyrosyl-[protein] + diphosphate. In terms of biological role, probable antitoxin component of a putative type VII toxin-antitoxin (TA) system. Neutralizes cognate toxic MJ0127 by di-AMPylation. In Methanocaldococcus jannaschii (strain ATCC 43067 / DSM 2661 / JAL-1 / JCM 10045 / NBRC 100440) (Methanococcus jannaschii), this protein is Putative protein adenylyltransferase MJ0128.